The following is a 597-amino-acid chain: Glutamine--fructose-6-phosphate aminotransferase [isomerizing] (597 aa).

Cys2 functions as the Nucleophile; for GATase activity in the catalytic mechanism. The region spanning 2–218 is the Glutamine amidotransferase type-2 domain; sequence CGIVGYIGDS…ENSVGQISLE (217 aa). 2 SIS domains span residues 276 to 416 and 449 to 587; these read IDPE…QLGT and LSKR…VDHP. The active-site For Fru-6P isomerization activity is Lys592.

As to quaternary structure, homodimer.

It is found in the cytoplasm. The enzyme catalyses D-fructose 6-phosphate + L-glutamine = D-glucosamine 6-phosphate + L-glutamate. Its function is as follows. Catalyzes the first step in hexosamine metabolism, converting fructose-6P into glucosamine-6P using glutamine as a nitrogen source. This Helicobacter pylori (strain J99 / ATCC 700824) (Campylobacter pylori J99) protein is Glutamine--fructose-6-phosphate aminotransferase [isomerizing].